A 78-amino-acid chain; its full sequence is MSRVCQLTGKKANNAYAISHSHRRTKKLQQVNLQWKRVWWPEGKRWVRLRLSTKAIKTLERKGLSAFAKEAGLDLNKL.

The protein belongs to the bacterial ribosomal protein bL28 family.

This chain is Large ribosomal subunit protein bL28, found in Thermosynechococcus vestitus (strain NIES-2133 / IAM M-273 / BP-1).